We begin with the raw amino-acid sequence, 246 residues long: Small ribosomal subunit protein uS2 (246 aa).

Positions 226–246 (QGEEEAEVAEETAPETETTTA) are disordered. Acidic residues predominate over residues 229–239 (EEAEVAEETAP).

It belongs to the universal ribosomal protein uS2 family. As to quaternary structure, part of the 30S ribosomal subunit. Interacts with BrxC.

The protein is Small ribosomal subunit protein uS2 (rpsB) of Bacillus subtilis (strain 168).